The sequence spans 328 residues: Gonadotropin-releasing hormone receptor (328 aa).

The Extracellular portion of the chain corresponds to 1 to 38 (MQDDTSSEQNPTHCSAINSSVPLVQGALPTLTLSGKIR). An N-linked (GlcNAc...) asparagine glycan is attached at Asn18. A helical membrane pass occupies residues 39 to 59 (VTVTFFLFLVSTTLNASFLLK). At 60–84 (LQKWTQKKEKGKKLSRMKVLLKHLT) the chain is on the cytoplasmic side. A helical transmembrane segment spans residues 85 to 105 (LANLLETLIVMPLDGMWNITV). The Extracellular segment spans residues 106-115 (QWYAGELLCK). Cys114 and Cys196 are oxidised to a cystine. Residues 116–136 (ILSYLKLFSMYAPAFMMVVIS) form a helical membrane-spanning segment. Over 137 to 160 (LDRSMAITRPLPVQSNRKLEQSMT) the chain is Cytoplasmic. The helical transmembrane segment at 161–181 (GLAWGLSSVLAGPQLYIFKMI) threads the bilayer. Residues 182–208 (HLENGPGQTEVFSQCVTHCSFPQWWHQ) are Extracellular-facing. A helical transmembrane segment spans residues 209-229 (AFYNFFTFICLFIIPLLIMLI). The Cytoplasmic segment spans residues 230–271 (CNAKIIFTLTQVLQQDSNKLQLNQSKNNIPRARLRTLKMTVA). The helical transmembrane segment at 272-292 (FAASFIVCWTPYYVLGLWYWF) threads the bilayer. At 293–306 (DPGMLHRMSEPVNH) the chain is on the extracellular side. A helical membrane pass occupies residues 307 to 327 (FFFLFAFLNPCFDPLIYGYFS). Leu328 is a topological domain (cytoplasmic).

It belongs to the G-protein coupled receptor 1 family.

It is found in the cell membrane. Its function is as follows. Receptor for gonadotropin releasing hormone (GnRH) that mediates the action of GnRH to stimulate the secretion of the gonadotropic hormones luteinizing hormone (LH) and follicle-stimulating hormone (FSH). This receptor mediates its action by association with G-proteins that activate a phosphatidylinositol-calcium second messenger system. This is Gonadotropin-releasing hormone receptor (GNRHR) from Cavia porcellus (Guinea pig).